The following is a 281-amino-acid chain: 3-hydroxyanthranilate 3,4-dioxygenase (281 aa).

The tract at residues 1 to 162 (MAGVTAIEIP…SNEFKTGKPG (162 aa)) is domain A (catalytic). Arg45 serves as a coordination point for O2. Fe cation contacts are provided by His49, Glu55, and His93. Glu55 contacts substrate. Substrate is bound by residues Arg97 and Glu107. Residues 163-179 (KGTFACNAPYEARWTDL) form a linker region. The tract at residues 180-281 (PVPINRKEFI…GFAITIRMPG (102 aa)) is domain B.

The protein belongs to the 3-HAO family. Fe(2+) serves as cofactor.

The protein resides in the cytoplasm. It carries out the reaction 3-hydroxyanthranilate + O2 = (2Z,4Z)-2-amino-3-carboxymuconate 6-semialdehyde. It functions in the pathway cofactor biosynthesis; NAD(+) biosynthesis; quinolinate from L-kynurenine: step 3/3. Catalyzes the oxidative ring opening of 3-hydroxyanthranilate to 2-amino-3-carboxymuconate semialdehyde, which spontaneously cyclizes to quinolinate. The chain is 3-hydroxyanthranilate 3,4-dioxygenase (haao-1) from Caenorhabditis briggsae.